The primary structure comprises 298 residues: Probable protein phosphatase 2C 26 (298 aa).

Positions 48-295 constitute a PPM-type phosphatase domain; it reads SVGIHAIPHP…DDVTVIVAKV (248 aa). Residues Asp82, Gly83, Asp213, and Asp286 each coordinate Mn(2+).

This sequence belongs to the PP2C family. Requires Mg(2+) as cofactor. Mn(2+) is required as a cofactor.

The enzyme catalyses O-phospho-L-seryl-[protein] + H2O = L-seryl-[protein] + phosphate. It carries out the reaction O-phospho-L-threonyl-[protein] + H2O = L-threonyl-[protein] + phosphate. This chain is Probable protein phosphatase 2C 26, found in Arabidopsis thaliana (Mouse-ear cress).